A 729-amino-acid chain; its full sequence is Leucine-rich repeat flightless-interacting protein 2 (729 aa).

Residues I27–W69 adopt a coiled-coil conformation. 3 disordered regions span residues D80 to H156, S230 to A268, and I289 to D344. Over residues H84–S93 the composition is skewed to basic residues. Over residues V99–V110 the composition is skewed to polar residues. The span at R115–S126 shows a compositional bias: basic and acidic residues. 2 stretches are compositionally biased toward low complexity: residues R137–D147 and S257–A268. Residues T304–I320 show a composition bias toward polar residues. Coiled coils occupy residues D357–K531 and L574–R722. Residues D600–N621 form a disordered region. Polar residues predominate over residues A607 to P616.

It belongs to the LRRFIP family.

Functionally, may function as activator of the canonical Wnt signaling pathway upstream of ctnnb1/beta-catenin. Might be required for dorsal axis formation. The chain is Leucine-rich repeat flightless-interacting protein 2 (lrrfip2) from Xenopus laevis (African clawed frog).